Consider the following 570-residue polypeptide: Phosphoenolpyruvate-protein phosphotransferase (570 aa).

The active-site Tele-phosphohistidine intermediate is the His189. Arg296 and Arg332 together coordinate phosphoenolpyruvate. Mg(2+)-binding residues include Glu431 and Asp455. Phosphoenolpyruvate contacts are provided by residues 454 to 455 (ND) and Arg465. Catalysis depends on Cys502, which acts as the Proton donor.

This sequence belongs to the PEP-utilizing enzyme family. Homodimer. Interacts with FloT. The cofactor is Mg(2+).

Its subcellular location is the cytoplasm. It is found in the membrane raft. The catalysed reaction is L-histidyl-[protein] + phosphoenolpyruvate = N(pros)-phospho-L-histidyl-[protein] + pyruvate. Its function is as follows. General (non sugar-specific) component of the phosphoenolpyruvate-dependent sugar phosphotransferase system (sugar PTS). This major carbohydrate active-transport system catalyzes the phosphorylation of incoming sugar substrates concomitantly with their translocation across the cell membrane. Enzyme I transfers the phosphoryl group from phosphoenolpyruvate (PEP) to the phosphoryl carrier protein (HPr). The protein is Phosphoenolpyruvate-protein phosphotransferase (ptsI) of Bacillus subtilis (strain 168).